We begin with the raw amino-acid sequence, 98 residues long: Integration host factor subunit alpha (98 aa).

The protein belongs to the bacterial histone-like protein family. Heterodimer of an alpha and a beta chain.

Functionally, this protein is one of the two subunits of integration host factor, a specific DNA-binding protein that functions in genetic recombination as well as in transcriptional and translational control. This Idiomarina loihiensis (strain ATCC BAA-735 / DSM 15497 / L2-TR) protein is Integration host factor subunit alpha.